The sequence spans 267 residues: L-aspartate dehydrogenase 2 (267 aa).

2 residues coordinate NAD(+): Ala123 and Asn189. His219 is an active-site residue.

The protein belongs to the L-aspartate dehydrogenase family.

The enzyme catalyses L-aspartate + NADP(+) + H2O = oxaloacetate + NH4(+) + NADPH + H(+). The catalysed reaction is L-aspartate + NAD(+) + H2O = oxaloacetate + NH4(+) + NADH + H(+). It participates in cofactor biosynthesis; NAD(+) biosynthesis; iminoaspartate from L-aspartate (dehydrogenase route): step 1/1. In terms of biological role, specifically catalyzes the NAD or NADP-dependent dehydrogenation of L-aspartate to iminoaspartate. This chain is L-aspartate dehydrogenase 2, found in Bordetella pertussis (strain Tohama I / ATCC BAA-589 / NCTC 13251).